We begin with the raw amino-acid sequence, 524 residues long: MADDPHNTSTSDVSELVPDNTEPSAANVKEDAETTAARRELKQTTISDKAKRDSAQLSQEDDKSASEEDDNKSDAGEPEKKKPRTSRGLTPEVQLAAPKQEVPKETVASPKKRTHDELEQDGKEEEEKKEGEKPSSQNRAERDEPEKKRPRDRQASLSVERDGQKEVEPLSAQESRPSSAEKPKIEEKKDESKDTKVDKPQTSSSAFANSSMAKFASSTTSPFGAFGAAAAGKTNLFGLPATSSNIFGSKSADASAAPAGPPKLSFGSASAASPFASLNGQAGGMSSLFKSPFASAFSGGSSALKTAGATGFGKPGEPLKTGKSAKPFGAPESDEEDEGEGEEGEENKSENGEGEEKEEEEKEEKASGEEKKKFKLQKVHIDDGEGNETTLLSVRAKMYVMEKGVGWKERGAGMLKVNVPKQAVEVEEGNQPDADSFDPAALDDAARKLVRLIMRQDSTLRVILNTPILPAMKFQVNHKLKAATVLFTAFEGGEARQVQMKMSQANATQFSNMVEKIKEKLAAA.

The tract at residues 1–219 (MADDPHNTST…SSMAKFASST (219 aa)) is disordered. Basic and acidic residues-rich tracts occupy residues 28–80 (VKED…EPEK), 114–168 (THDE…KEVE), and 179–199 (SAEKPKIEEKKDESKDTKVDK). The Nuclear localization signal signature appears at 37-44 (ARRELKQT). Positions 111 to 133 (KKRTHDELEQDGKEEEEKKEGEK) form a coiled coil. A compositionally biased stretch (polar residues) spans 200–219 (PQTSSSAFANSSMAKFASST). 7 FG repeats span residues 223–224 (FG), 226–227 (FG), 237–238 (FG), 247–248 (FG), 266–267 (FG), 312–313 (FG), and 328–329 (FG). Disordered regions lie at residues 247–284 (FGSKSADASAAPAGPPKLSFGSASAASPFASLNGQAGG) and 300–371 (GSSA…GEEK). The span at 248–277 (GSKSADASAAPAGPPKLSFGSASAASPFAS) shows a compositional bias: low complexity. Acidic residues-rich tracts occupy residues 332-345 (ESDEEDEGEGEEGE) and 352-362 (GEGEEKEEEEK). Residues 345 to 376 (EENKSENGEGEEKEEEEKEEKASGEEKKKFKL) are a coiled coil. The 99-residue stretch at 377 to 475 (QKVHIDDGEG…TPILPAMKFQ (99 aa)) folds into the RanBD1 domain. A coiled-coil region spans residues 503-524 (SQANATQFSNMVEKIKEKLAAA).

As to quaternary structure, the nuclear pore complex (NPC) constitutes the exclusive means of nucleocytoplasmic transport. NPCs allow the passive diffusion of ions and small molecules and the active, nuclear transport receptor-mediated bidirectional transport of macromolecules such as proteins, RNAs, ribonucleoparticles (RNPs), and ribosomal subunits across the nuclear envelope. The 55-60 MDa NPC is composed of at least 28 different subunits: AMO1, ELYS, GLE1, GLE2, MLP1, NDC1, NIC96, NSP1, NUP133, NUP145, NUP152, NUP159, NUP170, NUP188, NUP192, NUP37, NUP49, NUP53, NUP56, NUP57, NUP82, NUP84, NUP85, POM152, POM33, POM34, SEC13 and SEH1. Due to its 8-fold rotational symmetry, all subunits are present with 8 copies or multiples thereof.

The protein localises to the nucleus. It is found in the nuclear pore complex. It localises to the nucleus membrane. Its function is as follows. Functions as a component of the nuclear pore complex (NPC). NPC components, collectively referred to as nucleoporins (NUPs), can play the role of both NPC structural components and of docking or interaction partners for transiently associated nuclear transport factors. Active directional transport is assured by both, a Phe-Gly (FG) repeat affinity gradient for these transport factors across the NPC and a transport cofactor concentration gradient across the nuclear envelope (GSP1 and GSP2 GTPases associated predominantly with GTP in the nucleus, with GDP in the cytoplasm). In Chaetomium thermophilum (strain DSM 1495 / CBS 144.50 / IMI 039719) (Thermochaetoides thermophila), this protein is Nucleoporin NUP56 (NUP56).